A 354-amino-acid polypeptide reads, in one-letter code: Holliday junction branch migration complex subunit RuvB (354 aa).

The interval 4 to 198 is large ATPase domain (RuvB-L); sequence TTDYGASNTG…FGFTAHLDFY (195 aa). Residues L37, R38, G79, K82, T83, T84, 145–147, R188, Y198, and R235 each bind ATP; that span reads EDF. T83 is a binding site for Mg(2+). Positions 199–269 are small ATPAse domain (RuvB-S); it reads PHEELEKLIE…DVKEALALYQ (71 aa). Residues 272–354 are head domain (RuvB-H); the sequence is SEGLDRLDIA…TPKDDVSKLF (83 aa). R327 and R332 together coordinate DNA.

The protein belongs to the RuvB family. In terms of assembly, homohexamer. Forms an RuvA(8)-RuvB(12)-Holliday junction (HJ) complex. HJ DNA is sandwiched between 2 RuvA tetramers; dsDNA enters through RuvA and exits via RuvB. An RuvB hexamer assembles on each DNA strand where it exits the tetramer. Each RuvB hexamer is contacted by two RuvA subunits (via domain III) on 2 adjacent RuvB subunits; this complex drives branch migration. In the full resolvosome a probable DNA-RuvA(4)-RuvB(12)-RuvC(2) complex forms which resolves the HJ.

It is found in the cytoplasm. The catalysed reaction is ATP + H2O = ADP + phosphate + H(+). Functionally, the RuvA-RuvB-RuvC complex processes Holliday junction (HJ) DNA during genetic recombination and DNA repair, while the RuvA-RuvB complex plays an important role in the rescue of blocked DNA replication forks via replication fork reversal (RFR). RuvA specifically binds to HJ cruciform DNA, conferring on it an open structure. The RuvB hexamer acts as an ATP-dependent pump, pulling dsDNA into and through the RuvAB complex. RuvB forms 2 homohexamers on either side of HJ DNA bound by 1 or 2 RuvA tetramers; 4 subunits per hexamer contact DNA at a time. Coordinated motions by a converter formed by DNA-disengaged RuvB subunits stimulates ATP hydrolysis and nucleotide exchange. Immobilization of the converter enables RuvB to convert the ATP-contained energy into a lever motion, pulling 2 nucleotides of DNA out of the RuvA tetramer per ATP hydrolyzed, thus driving DNA branch migration. The RuvB motors rotate together with the DNA substrate, which together with the progressing nucleotide cycle form the mechanistic basis for DNA recombination by continuous HJ branch migration. Branch migration allows RuvC to scan DNA until it finds its consensus sequence, where it cleaves and resolves cruciform DNA. In Bifidobacterium longum (strain NCC 2705), this protein is Holliday junction branch migration complex subunit RuvB.